A 337-amino-acid chain; its full sequence is Vacuolar protein sorting-associated protein 26B-A (337 aa).

The interval 313–337 (RFEGTSHPETRPQHSGAAAVEQEHE) is disordered.

The protein belongs to the VPS26 family. As to quaternary structure, component of the heterotrimeric retromer cargo-selective complex (CSC) which is believed to associate with variable sorting nexins to form functionally distinct retromer complex variants.

The protein localises to the cytoplasm. The protein resides in the endosome membrane. Its subcellular location is the early endosome. Acts as a component of the retromer cargo-selective complex (CSC). The CSC is believed to be the core functional component of retromer or respective retromer complex variants acting to prevent missorting of selected transmembrane cargo proteins into the lysosomal degradation pathway. Retromer mediates retrograde transport of cargo proteins from endosomes to the trans-Golgi network (TGN). The chain is Vacuolar protein sorting-associated protein 26B-A (vps26b-a) from Xenopus laevis (African clawed frog).